Reading from the N-terminus, the 116-residue chain is Large ribosomal subunit protein bL17 (116 aa).

Belongs to the bacterial ribosomal protein bL17 family. As to quaternary structure, part of the 50S ribosomal subunit. Contacts protein L32.

This Sulfurimonas denitrificans (strain ATCC 33889 / DSM 1251) (Thiomicrospira denitrificans (strain ATCC 33889 / DSM 1251)) protein is Large ribosomal subunit protein bL17.